We begin with the raw amino-acid sequence, 454 residues long: Bifunctional protein GlmU (454 aa).

The tract at residues methionine 1 to arginine 226 is pyrophosphorylase. UDP-N-acetyl-alpha-D-glucosamine is bound by residues leucine 8 to glycine 11, lysine 22, glutamine 73, glycine 78 to threonine 79, tyrosine 99 to aspartate 101, glycine 136, glutamate 151, asparagine 166, and asparagine 224. Aspartate 101 provides a ligand contact to Mg(2+). Residue asparagine 224 participates in Mg(2+) binding. Residues methionine 227 to glutamine 247 form a linker region. The N-acetyltransferase stretch occupies residues glycine 248–lysine 454. UDP-N-acetyl-alpha-D-glucosamine is bound by residues arginine 330 and lysine 348. Histidine 360 acts as the Proton acceptor in catalysis. Positions 363 and 374 each coordinate UDP-N-acetyl-alpha-D-glucosamine. Acetyl-CoA-binding positions include alanine 377, asparagine 383–tyrosine 384, serine 402, alanine 420, and arginine 437.

In the N-terminal section; belongs to the N-acetylglucosamine-1-phosphate uridyltransferase family. This sequence in the C-terminal section; belongs to the transferase hexapeptide repeat family. In terms of assembly, homotrimer. Mg(2+) is required as a cofactor.

It localises to the cytoplasm. The enzyme catalyses alpha-D-glucosamine 1-phosphate + acetyl-CoA = N-acetyl-alpha-D-glucosamine 1-phosphate + CoA + H(+). It carries out the reaction N-acetyl-alpha-D-glucosamine 1-phosphate + UTP + H(+) = UDP-N-acetyl-alpha-D-glucosamine + diphosphate. It participates in nucleotide-sugar biosynthesis; UDP-N-acetyl-alpha-D-glucosamine biosynthesis; N-acetyl-alpha-D-glucosamine 1-phosphate from alpha-D-glucosamine 6-phosphate (route II): step 2/2. The protein operates within nucleotide-sugar biosynthesis; UDP-N-acetyl-alpha-D-glucosamine biosynthesis; UDP-N-acetyl-alpha-D-glucosamine from N-acetyl-alpha-D-glucosamine 1-phosphate: step 1/1. It functions in the pathway bacterial outer membrane biogenesis; LPS lipid A biosynthesis. In terms of biological role, catalyzes the last two sequential reactions in the de novo biosynthetic pathway for UDP-N-acetylglucosamine (UDP-GlcNAc). The C-terminal domain catalyzes the transfer of acetyl group from acetyl coenzyme A to glucosamine-1-phosphate (GlcN-1-P) to produce N-acetylglucosamine-1-phosphate (GlcNAc-1-P), which is converted into UDP-GlcNAc by the transfer of uridine 5-monophosphate (from uridine 5-triphosphate), a reaction catalyzed by the N-terminal domain. This Pseudomonas paraeruginosa (strain DSM 24068 / PA7) (Pseudomonas aeruginosa (strain PA7)) protein is Bifunctional protein GlmU.